The following is a 91-amino-acid chain: MKMYNIPTPTMAQVIMVDDPITTTEFVISALRDFFDKSLEEAKALTSSIHRDGEGVCGVYPYDIARHRAAWVRDKAKALEFPLKLLVEEIK.

It belongs to the ClpS family. As to quaternary structure, binds to the N-terminal domain of the chaperone ClpA.

Involved in the modulation of the specificity of the ClpAP-mediated ATP-dependent protein degradation. This is ATP-dependent Clp protease adapter protein ClpS from Helicobacter pylori (strain ATCC 700392 / 26695) (Campylobacter pylori).